The primary structure comprises 433 residues: Enolase (433 aa).

Residue Gln-167 participates in (2R)-2-phosphoglycerate binding. Catalysis depends on Glu-209, which acts as the Proton donor. Mg(2+)-binding residues include Asp-246, Glu-291, and Asp-318. (2R)-2-phosphoglycerate contacts are provided by Lys-343, Arg-372, Ser-373, and Lys-394. Lys-343 acts as the Proton acceptor in catalysis.

The protein belongs to the enolase family. Component of the RNA degradosome, a multiprotein complex involved in RNA processing and mRNA degradation. Mg(2+) serves as cofactor.

It is found in the cytoplasm. It localises to the secreted. The protein resides in the cell surface. The catalysed reaction is (2R)-2-phosphoglycerate = phosphoenolpyruvate + H2O. It functions in the pathway carbohydrate degradation; glycolysis; pyruvate from D-glyceraldehyde 3-phosphate: step 4/5. Functionally, catalyzes the reversible conversion of 2-phosphoglycerate (2-PG) into phosphoenolpyruvate (PEP). It is essential for the degradation of carbohydrates via glycolysis. This Shewanella piezotolerans (strain WP3 / JCM 13877) protein is Enolase.